The primary structure comprises 761 residues: Polyribonucleotide nucleotidyltransferase (761 aa).

Mg(2+)-binding residues include D532 and D538. The region spanning 598 to 657 (PRVISVQIPVDKIGELIGPKGKTINAIQDETGADISIDEDGTVYIGAVDGPSAEAARAQV) is the KH domain. The region spanning 669-741 (GEQFLGTVVK…DRGKLSLAPV (73 aa)) is the S1 motif domain.

It belongs to the polyribonucleotide nucleotidyltransferase family. It depends on Mg(2+) as a cofactor.

It is found in the cytoplasm. It catalyses the reaction RNA(n+1) + phosphate = RNA(n) + a ribonucleoside 5'-diphosphate. Its function is as follows. Involved in mRNA degradation. Catalyzes the phosphorolysis of single-stranded polyribonucleotides processively in the 3'- to 5'-direction. The sequence is that of Polyribonucleotide nucleotidyltransferase from Leifsonia xyli subsp. xyli (strain CTCB07).